The following is a 549-amino-acid chain: Tigger transposable element-derived protein 7 (549 aa).

The HTH psq-type domain occupies 1–52; sequence MNKRGKYTTLNLEEKMKVLSRIEAGRSLKSVMDEFGISKSTFYDIKKNKKLI. 2 DNA-binding regions (H-T-H motif) span residues 28–48 and 101–132; these read LKSVMDEFGISKSTFYDIKKN and VELQAAAERFARCFGRTDFKASTGWLFRFRNR. The HTH CENPB-type domain occupies 68 to 139; it reads KRKRTTGAKY…RNRHAIGNRK (72 aa). Positions 169–399 constitute a DDE-1 domain; that stretch reads LCLAQLYSGD…VKQITIANAW (231 aa). Residues 527-549 form a disordered region; it reads FLKPRPHNIKDSFSGPSTSGSNH. The segment covering 540 to 549 has biased composition (polar residues); that stretch reads SGPSTSGSNH.

It belongs to the tigger transposable element derived protein family. As to expression, expressed in all tissues tested. Higher expression in testis and ovary.

The protein resides in the nucleus. In Homo sapiens (Human), this protein is Tigger transposable element-derived protein 7 (TIGD7).